The primary structure comprises 175 residues: Peptide deformylase (175 aa).

2 residues coordinate Fe cation: cysteine 96 and histidine 138. The active site involves glutamate 139. A Fe cation-binding site is contributed by histidine 142.

The protein belongs to the polypeptide deformylase family. It depends on Fe(2+) as a cofactor.

The catalysed reaction is N-terminal N-formyl-L-methionyl-[peptide] + H2O = N-terminal L-methionyl-[peptide] + formate. Functionally, removes the formyl group from the N-terminal Met of newly synthesized proteins. Requires at least a dipeptide for an efficient rate of reaction. N-terminal L-methionine is a prerequisite for activity but the enzyme has broad specificity at other positions. The chain is Peptide deformylase from Rhodopseudomonas palustris (strain BisB5).